The following is a 223-amino-acid chain: Ribosomal RNA small subunit methyltransferase G (223 aa).

The S-adenosyl-L-methionine site is built by Gly85, Phe90, and Arg154.

The protein belongs to the methyltransferase superfamily. RNA methyltransferase RsmG family.

The protein localises to the cytoplasm. It catalyses the reaction guanosine(527) in 16S rRNA + S-adenosyl-L-methionine = N(7)-methylguanosine(527) in 16S rRNA + S-adenosyl-L-homocysteine. Specifically methylates the N7 position of guanine in position 527 of 16S rRNA. The protein is Ribosomal RNA small subunit methyltransferase G of Rhodopseudomonas palustris (strain ATCC BAA-98 / CGA009).